A 152-amino-acid chain; its full sequence is uncharacterized protein (152 aa).

A signal peptide spans Met1–Cys24.

This is an uncharacterized protein from Acheta domesticus (House cricket).